Here is a 581-residue protein sequence, read N- to C-terminus: Pentatricopeptide repeat-containing protein At1g34160 (581 aa).

PPR repeat units lie at residues 67–101 (LTND…SSSS), 108–142 (DALT…GLSA), 143–173 (DSLL…MPVR), 174–208 (DVAS…GIRR), 209–239 (SEVT…YSND), 240–270 (NVIV…FTGK), 272–306 (SVVT…GIKP), 307–341 (DDVS…GVER), and 342–372 (NMKH…MSMI). The segment at 377-452 (LWQSLLGASE…IPGLSYIEAK (76 aa)) is type E motif. The interval 453-483 (GTIHEFYNSDKSHEQWREIYEKIDEIRFKIR) is type E(+) motif. A type DYW motif region spans residues 484–581 (EDGYVAQTGL…DGSCSCRDFW (98 aa)).

The protein belongs to the PPR family. PCMP-H subfamily.

This is Pentatricopeptide repeat-containing protein At1g34160 (PCMP-H68) from Arabidopsis thaliana (Mouse-ear cress).